The chain runs to 273 residues: Glutamate racemase (273 aa).

Substrate-binding positions include 11 to 12 and 43 to 44; these read DS and YG. Residue C74 is the Proton donor/acceptor of the active site. 75–76 is a binding site for substrate; that stretch reads NT. Catalysis depends on C185, which acts as the Proton donor/acceptor. 186 to 187 is a substrate binding site; it reads TH.

The protein belongs to the aspartate/glutamate racemases family. As to quaternary structure, homodimer.

The catalysed reaction is L-glutamate = D-glutamate. Its pathway is cell wall biogenesis; peptidoglycan biosynthesis. Functionally, provides the (R)-glutamate required for cell wall biosynthesis. In Enterococcus faecalis (strain ATCC 700802 / V583), this protein is Glutamate racemase.